A 305-amino-acid polypeptide reads, in one-letter code: MFADITTKLKSQMPELRGRMLANEPLAPLTWFRVGGPAQVLFTPADENDLAYFLRHLPEEIPIYCIGVGSNLIVRDRGLPGVVIRLAPRGFGEVTTDGDTVHAGAAALDKRVAEAAAAADIGGLEFYFGIPGTIGGALRMNAGANGSETKDVLVEARAVSRRGDKITVDNAGMKFEYRNSAIYPSVIFTGGTFRGRRAEPEAIRARMNEVQSHRETVQPIREKTGGSTFKNPPGQSAWKLIDAAGMRGHRVGGAQVSEMHCNFLINTGEATARDIETLGETVRARVKEHAGVDLQWEIKRIGLEA.

Positions Arg-33–Ala-198 constitute an FAD-binding PCMH-type domain. Arg-178 is a catalytic residue. The Proton donor role is filled by Ser-227. Residue Glu-297 is part of the active site.

The protein belongs to the MurB family. FAD is required as a cofactor.

It is found in the cytoplasm. It carries out the reaction UDP-N-acetyl-alpha-D-muramate + NADP(+) = UDP-N-acetyl-3-O-(1-carboxyvinyl)-alpha-D-glucosamine + NADPH + H(+). The protein operates within cell wall biogenesis; peptidoglycan biosynthesis. Cell wall formation. The sequence is that of UDP-N-acetylenolpyruvoylglucosamine reductase from Nitrobacter hamburgensis (strain DSM 10229 / NCIMB 13809 / X14).